Consider the following 213-residue polypeptide: 3-isopropylmalate dehydratase small subunit (213 aa).

The protein belongs to the LeuD family. LeuD type 1 subfamily. In terms of assembly, heterodimer of LeuC and LeuD.

The enzyme catalyses (2R,3S)-3-isopropylmalate = (2S)-2-isopropylmalate. Its pathway is amino-acid biosynthesis; L-leucine biosynthesis; L-leucine from 3-methyl-2-oxobutanoate: step 2/4. Catalyzes the isomerization between 2-isopropylmalate and 3-isopropylmalate, via the formation of 2-isopropylmaleate. The polypeptide is 3-isopropylmalate dehydratase small subunit (Neisseria gonorrhoeae (strain ATCC 700825 / FA 1090)).